A 138-amino-acid polypeptide reads, in one-letter code: uncharacterized protein (138 aa).

Positions 89–138 are disordered; it reads DDYEDDFEDSDFQDGDFDDFEDEDGFDDDDDFEDDDFEYEDEDNDLDFDE.

This is an uncharacterized protein from Treponema pallidum (strain Nichols).